A 258-amino-acid polypeptide reads, in one-letter code: Probable dihydroorotate dehydrogenase B (NAD(+)), electron transfer subunit (258 aa).

Residues 1–90 (MRPISATIKE…RGPYGNGWEI (90 aa)) form the FAD-binding FR-type domain. 4 residues coordinate [2Fe-2S] cluster: Cys210, Cys215, Cys218, and Cys228.

Belongs to the PyrK family. In terms of assembly, heterotetramer of 2 PyrK and 2 PyrD type B subunits. Requires [2Fe-2S] cluster as cofactor. FAD serves as cofactor.

Its pathway is pyrimidine metabolism; UMP biosynthesis via de novo pathway; orotate from (S)-dihydroorotate (NAD(+) route): step 1/1. Its function is as follows. Responsible for channeling the electrons from the oxidation of dihydroorotate from the FMN redox center in the PyrD type B subunit to the ultimate electron acceptor NAD(+). This Methanocella arvoryzae (strain DSM 22066 / NBRC 105507 / MRE50) protein is Probable dihydroorotate dehydrogenase B (NAD(+)), electron transfer subunit.